Consider the following 107-residue polypeptide: Phosphoribosyl-ATP pyrophosphatase (107 aa).

Belongs to the PRA-PH family.

It localises to the cytoplasm. The enzyme catalyses 1-(5-phospho-beta-D-ribosyl)-ATP + H2O = 1-(5-phospho-beta-D-ribosyl)-5'-AMP + diphosphate + H(+). The protein operates within amino-acid biosynthesis; L-histidine biosynthesis; L-histidine from 5-phospho-alpha-D-ribose 1-diphosphate: step 2/9. The sequence is that of Phosphoribosyl-ATP pyrophosphatase from Bacillus mycoides (strain KBAB4) (Bacillus weihenstephanensis).